We begin with the raw amino-acid sequence, 454 residues long: L-serine dehydratase TdcG (454 aa).

The protein belongs to the iron-sulfur dependent L-serine dehydratase family. [4Fe-4S] cluster is required as a cofactor.

The enzyme catalyses L-serine = pyruvate + NH4(+). The protein operates within amino-acid degradation; L-threonine degradation via propanoate pathway. The sequence is that of L-serine dehydratase TdcG (tdcG) from Escherichia coli (strain K12).